Here is a 403-residue protein sequence, read N- to C-terminus: S-adenosylmethionine synthase (403 aa).

His-16 is an ATP binding site. Asp-18 lines the Mg(2+) pocket. Glu-44 contributes to the K(+) binding site. L-methionine contacts are provided by Glu-57 and Gln-100. The interval 100–110 (QSSDIAQGVDR) is flexible loop. Residues 165 to 167 (DAK), Asp-242, 248 to 249 (RK), Ala-265, and Lys-269 each bind ATP. Asp-242 is a binding site for L-methionine. Lys-273 contributes to the L-methionine binding site.

This sequence belongs to the AdoMet synthase family. As to quaternary structure, homotetramer; dimer of dimers. It depends on Mg(2+) as a cofactor. K(+) is required as a cofactor.

The protein resides in the cytoplasm. The enzyme catalyses L-methionine + ATP + H2O = S-adenosyl-L-methionine + phosphate + diphosphate. It functions in the pathway amino-acid biosynthesis; S-adenosyl-L-methionine biosynthesis; S-adenosyl-L-methionine from L-methionine: step 1/1. In terms of biological role, catalyzes the formation of S-adenosylmethionine (AdoMet) from methionine and ATP. The overall synthetic reaction is composed of two sequential steps, AdoMet formation and the subsequent tripolyphosphate hydrolysis which occurs prior to release of AdoMet from the enzyme. The polypeptide is S-adenosylmethionine synthase (Nitrosococcus oceani (strain ATCC 19707 / BCRC 17464 / JCM 30415 / NCIMB 11848 / C-107)).